The sequence spans 367 residues: Quinolinate synthase (367 aa).

Iminosuccinate-binding residues include His-45 and Ser-62. Residue Cys-109 coordinates [4Fe-4S] cluster. Residues 140-142 (YVN) and Ser-161 contribute to the iminosuccinate site. A [4Fe-4S] cluster-binding site is contributed by Cys-229. Iminosuccinate contacts are provided by residues 255–257 (HPE) and Thr-272. Cys-319 is a [4Fe-4S] cluster binding site.

This sequence belongs to the quinolinate synthase family. Type 3 subfamily. Requires [4Fe-4S] cluster as cofactor.

Its subcellular location is the cytoplasm. It catalyses the reaction iminosuccinate + dihydroxyacetone phosphate = quinolinate + phosphate + 2 H2O + H(+). The protein operates within cofactor biosynthesis; NAD(+) biosynthesis; quinolinate from iminoaspartate: step 1/1. Functionally, catalyzes the condensation of iminoaspartate with dihydroxyacetone phosphate to form quinolinate. This chain is Quinolinate synthase, found in Halalkalibacterium halodurans (strain ATCC BAA-125 / DSM 18197 / FERM 7344 / JCM 9153 / C-125) (Bacillus halodurans).